The chain runs to 648 residues: Mitochondrial Rho GTPase 1 (648 aa).

The Cytoplasmic portion of the chain corresponds to 1–619 (MARYAAGAVD…KHYNRLINRS (619 aa)). Position 14 is a phosphoserine (S14). Residues 15-182 (PKSVRIVVVG…FYYAQKTVLH (168 aa)) form the Miro 1 domain. EF-hand domains lie at 198 to 233 (RCVRALKRIFILCDHDRDGALSEAELNDFQVKCFHA) and 319 to 354 (AAIDFLKGMYMLFDDDQDNNLRPQEIEDLFSTAPES). Ca(2+) contacts are provided by D211, D213, D215, E222, D332, D334, D336, N338, and E343. The 169-residue stretch at 427 to 595 (RKVFQCFVFG…FRKILTAAQH (169 aa)) folds into the Miro 2 domain. A helical membrane pass occupies residues 620 to 640 (LMAVSIGAAAVVVGLAAYRVY). Residues 641–648 (ATRKSSSA) lie on the Mitochondrial intermembrane side of the membrane.

The protein belongs to the mitochondrial Rho GTPase family. In terms of tissue distribution, expressed in roots, leaves, stems, flowers and siliques.

The protein localises to the mitochondrion outer membrane. Functionally, mitochondrial GTPase required to maintain proper development, morphology and intracellular distribution of mitochondria, which in turn are essential for the progress of embryonic cell division, development of haploid male and female gametes, and pollen tube growth. The polypeptide is Mitochondrial Rho GTPase 1 (Arabidopsis thaliana (Mouse-ear cress)).